The following is a 166-amino-acid chain: Deglycase PfpI (166 aa).

One can recognise a PfpI endopeptidase domain in the interval 1 to 166 (MKILFLSANE…WMREFVKLLK (166 aa)). C100 (nucleophile) is an active-site residue. H101 is a catalytic residue.

The protein belongs to the peptidase C56 family. In terms of assembly, homooligomer. Exists in two functional species: the predominant form is a homohexamer that comprises about 90% of the total activity, and the minor form is trimeric.

The protein localises to the cytoplasm. The enzyme catalyses N(omega)-(1-hydroxy-2-oxopropyl)-L-arginyl-[protein] + H2O = lactate + L-arginyl-[protein] + H(+). It catalyses the reaction N(6)-(1-hydroxy-2-oxopropyl)-L-lysyl-[protein] + H2O = lactate + L-lysyl-[protein] + H(+). It carries out the reaction S-(1-hydroxy-2-oxopropyl)-L-cysteinyl-[protein] + H2O = lactate + L-cysteinyl-[protein] + H(+). The catalysed reaction is N(omega)-(1-hydroxy-2-oxoethyl)-L-arginyl-[protein] + H2O = L-arginyl-[protein] + glycolate + H(+). The enzyme catalyses N(6)-(1-hydroxy-2-oxoethyl)-L-lysyl-[protein] + H2O = glycolate + L-lysyl-[protein] + H(+). It catalyses the reaction S-(1-hydroxy-2-oxoethyl)-L-cysteinyl-[protein] + H2O = glycolate + L-cysteinyl-[protein] + H(+). Deglycase that catalyzes the deglycation of the Maillard adducts formed between amino groups of proteins and reactive carbonyl groups of glyoxals. Thus, functions as a protein deglycase that repairs methylglyoxal- and glyoxal-glycated proteins, and releases repaired proteins and lactate or glycolate, respectively. Deglycates cysteine, arginine and lysine residues in proteins, and thus reactivates these proteins by reversing glycation by glyoxals. Thus, was shown to afford full protection against glycation of thioredoxin by glyoxal. Acts on early glycation intermediates (hemithioacetals and aminocarbinols), preventing the formation of advanced glycation endproducts (AGE) that cause irreversible damage. Prevents acrylamide formation in asparagine/glyoxal and asparagine/sugar mixtures, likely by degrading asparagine/glyoxal Maillard adducts formed at high temperatures. Also displays proteolytic activity. Cleaves at the carboxyl side of both basic and hydrophobic residues in the P1 position, indicating trypsin- and chymotrypsin-like specificities. The chain is Deglycase PfpI from Pyrococcus furiosus (strain ATCC 43587 / DSM 3638 / JCM 8422 / Vc1).